A 724-amino-acid polypeptide reads, in one-letter code: uncharacterized protein (724 aa).

4 disordered regions span residues 97 to 131, 187 to 252, 309 to 434, and 454 to 473; these read RKSF…YPSP, ETKI…FETE, FETE…TSKL, and RGVE…VAEK. Residues 115 to 128 show a composition bias toward polar residues; the sequence is TRSASYSESNNSFY. A coiled-coil region spans residues 187 to 217; sequence ETKIGIEEENEESEILAEEKEEEDNDFSVLE. Residues 193–212 show a composition bias toward acidic residues; the sequence is EEENEESEILAEEKEEEDND. 2 stretches are compositionally biased toward basic and acidic residues: residues 223-252 and 309-322; these read QEIK…FETE and FETE…DHSE. 2 stretches are compositionally biased toward low complexity: residues 323-333 and 347-366; these read TTTSETDSTES and SPQT…SLRS. Over residues 367–388 the composition is skewed to pro residues; sequence QPPPPPPSPEHKAPAPPPPPPM. Residues 400-410 are compositionally biased toward polar residues; sequence FSKTHSTNGDN. Coiled coils occupy residues 495 to 522 and 649 to 678; these read SYFQ…HSFQ and MELA…RAKR.

This is an uncharacterized protein from Arabidopsis thaliana (Mouse-ear cress).